We begin with the raw amino-acid sequence, 148 residues long: SsrA-binding protein (148 aa).

The interval 124–148 is disordered; the sequence is QFDKRETEKDRDWQREKARLMREKA.

Belongs to the SmpB family.

It localises to the cytoplasm. In terms of biological role, required for rescue of stalled ribosomes mediated by trans-translation. Binds to transfer-messenger RNA (tmRNA), required for stable association of tmRNA with ribosomes. tmRNA and SmpB together mimic tRNA shape, replacing the anticodon stem-loop with SmpB. tmRNA is encoded by the ssrA gene; the 2 termini fold to resemble tRNA(Ala) and it encodes a 'tag peptide', a short internal open reading frame. During trans-translation Ala-aminoacylated tmRNA acts like a tRNA, entering the A-site of stalled ribosomes, displacing the stalled mRNA. The ribosome then switches to translate the ORF on the tmRNA; the nascent peptide is terminated with the 'tag peptide' encoded by the tmRNA and targeted for degradation. The ribosome is freed to recommence translation, which seems to be the essential function of trans-translation. In Ralstonia pickettii (strain 12J), this protein is SsrA-binding protein.